Consider the following 542-residue polypeptide: CTP synthase (542 aa).

Residues 1–265 (MTKFVFVTGG…DEIVCHKLNL (265 aa)) form an amidoligase domain region. Residue Ser13 coordinates CTP. Residue Ser13 participates in UTP binding. Residues 14–19 (SLGKGI) and Asp71 each bind ATP. Residues Asp71 and Glu139 each contribute to the Mg(2+) site. CTP-binding positions include 146–148 (DIE), 186–191 (KTKPTQ), and Lys222. UTP is bound by residues 186-191 (KTKPTQ) and Lys222. In terms of domain architecture, Glutamine amidotransferase type-1 spans 290 to 542 (NVAFVGKYVD…IAAALANRKA (253 aa)). Gly351 is an L-glutamine binding site. Cys378 acts as the Nucleophile; for glutamine hydrolysis in catalysis. L-glutamine is bound by residues 379 to 382 (LGMQ), Glu402, and Arg468. Catalysis depends on residues His515 and Glu517.

It belongs to the CTP synthase family. In terms of assembly, homotetramer.

It carries out the reaction UTP + L-glutamine + ATP + H2O = CTP + L-glutamate + ADP + phosphate + 2 H(+). The enzyme catalyses L-glutamine + H2O = L-glutamate + NH4(+). The catalysed reaction is UTP + NH4(+) + ATP = CTP + ADP + phosphate + 2 H(+). It participates in pyrimidine metabolism; CTP biosynthesis via de novo pathway; CTP from UDP: step 2/2. Its activity is regulated as follows. Allosterically activated by GTP, when glutamine is the substrate; GTP has no effect on the reaction when ammonia is the substrate. The allosteric effector GTP functions by stabilizing the protein conformation that binds the tetrahedral intermediate(s) formed during glutamine hydrolysis. Inhibited by the product CTP, via allosteric rather than competitive inhibition. Catalyzes the ATP-dependent amination of UTP to CTP with either L-glutamine or ammonia as the source of nitrogen. Regulates intracellular CTP levels through interactions with the four ribonucleotide triphosphates. The chain is CTP synthase from Methylobacillus flagellatus (strain ATCC 51484 / DSM 6875 / VKM B-1610 / KT).